A 479-amino-acid chain; its full sequence is Beta-amyrin 28-monooxygenase (479 aa).

Residues 5-25 form a helical membrane-spanning segment; the sequence is FYLSLLLLFVTFISLSLFFIF. Cys-426 contacts heme.

It belongs to the cytochrome P450 family. Heme serves as cofactor. Expressed in roots, nodules and flowers.

The protein localises to the membrane. It catalyses the reaction beta-amyrin + 3 reduced [NADPH--hemoprotein reductase] + 3 O2 = oleanolate + 3 oxidized [NADPH--hemoprotein reductase] + 4 H2O + 4 H(+). Its function is as follows. Catalyzes the carboxylation of beta-amyrin at the C-28 position to form oleanolic acid. Involved in an early step in the hemolytic saponin biosynthetic pathway. Catalyzes the carboxylation of alpha-amyrin and lupeol at the C-28 position to form ursolic acid and betulinic acid respectively. The polypeptide is Beta-amyrin 28-monooxygenase (Medicago truncatula (Barrel medic)).